A 187-amino-acid polypeptide reads, in one-letter code: Capsid protein (187 aa).

The segment at 150 to 187 (RRGGARASRSPRRRTPSPRRRRSQSPRRRRSQSPSANC) is disordered. Residues 158-180 (RSPRRRTPSPRRRRSQSPRRRRS) are compositionally biased toward basic residues. Phosphoserine; by host is present on residues Ser159, Ser166, and Ser174. A 1; half-length repeat occupies 159 to 165 (SPRRRTP). The tract at residues 159–181 (SPRRRTPSPRRRRSQSPRRRRSQ) is 3 X 8 AA repeats of S-P-R-R-R-[PR]-S-Q. The Bipartite nuclear localization signal signature appears at 162–179 (RRTPSPRRRRSQSPRRRR). A run of 2 repeats spans residues 166–173 (SPRRRRSQ) and 174–181 (SPRRRRSQ). Residues 181 to 187 (QSPSANC) form an RNA binding region.

It belongs to the orthohepadnavirus core antigen family. As to quaternary structure, homodimerizes, then multimerizes. Interacts with cytosol exposed regions of viral L glycoprotein present in the reticulum-to-Golgi compartment. Interacts with human FLNB. Phosphorylated form interacts with host importin alpha; this interaction depends on the exposure of the NLS, which itself depends upon genome maturation and/or phosphorylation of the capsid protein. Interacts with host NUP153. In terms of processing, phosphorylated by host SRPK1, SRPK2, and maybe protein kinase C or GAPDH. Phosphorylation is critical for pregenomic RNA packaging. Protein kinase C phosphorylation is stimulated by HBx protein and may play a role in transport of the viral genome to the nucleus at the late step during the viral replication cycle.

It localises to the virion. It is found in the host cytoplasm. Self assembles to form an icosahedral capsid. Most capsids appear to be large particles with an icosahedral symmetry of T=4 and consist of 240 copies of capsid protein, though a fraction forms smaller T=3 particles consisting of 180 capsid proteins. Entering capsids are transported along microtubules to the nucleus. Phosphorylation of the capsid is thought to induce exposure of nuclear localization signal in the C-terminal portion of the capsid protein that allows binding to the nuclear pore complex via the importin (karyopherin-) alpha and beta. Capsids are imported in intact form through the nuclear pore into the nuclear basket, where it probably binds NUP153. Only capsids that contain the mature viral genome can release the viral DNA and capsid protein into the nucleoplasm. Immature capsids get stuck in the basket. Capsids encapsulate the pre-genomic RNA and the P protein. Pre-genomic RNA is reverse-transcribed into DNA while the capsid is still in the cytoplasm. The capsid can then either be directed to the nucleus, providing more genomes for transcription, or bud through the endoplasmic reticulum to provide new virions. This chain is Capsid protein, found in Marmota monax (Woodchuck).